The chain runs to 365 residues: Flagellar P-ring protein 2 (365 aa).

The signal sequence occupies residues M1–S19.

The protein belongs to the FlgI family. The basal body constitutes a major portion of the flagellar organelle and consists of four rings (L,P,S, and M) mounted on a central rod.

It localises to the periplasm. The protein localises to the bacterial flagellum basal body. Its function is as follows. Assembles around the rod to form the L-ring and probably protects the motor/basal body from shearing forces during rotation. The sequence is that of Flagellar P-ring protein 2 from Chromobacterium violaceum (strain ATCC 12472 / DSM 30191 / JCM 1249 / CCUG 213 / NBRC 12614 / NCIMB 9131 / NCTC 9757 / MK).